A 355-amino-acid polypeptide reads, in one-letter code: Methylthioribose-1-phosphate isomerase (355 aa).

Substrate contacts are provided by residues 53–55 (RGA), arginine 96, and glutamine 205. Aspartate 246 acts as the Proton donor in catalysis. Position 256-257 (256-257 (NK)) interacts with substrate.

It belongs to the eIF-2B alpha/beta/delta subunits family. MtnA subfamily.

The enzyme catalyses 5-(methylsulfanyl)-alpha-D-ribose 1-phosphate = 5-(methylsulfanyl)-D-ribulose 1-phosphate. Its pathway is amino-acid biosynthesis; L-methionine biosynthesis via salvage pathway; L-methionine from S-methyl-5-thio-alpha-D-ribose 1-phosphate: step 1/6. Its function is as follows. Catalyzes the interconversion of methylthioribose-1-phosphate (MTR-1-P) into methylthioribulose-1-phosphate (MTRu-1-P). The protein is Methylthioribose-1-phosphate isomerase of Thermosynechococcus vestitus (strain NIES-2133 / IAM M-273 / BP-1).